We begin with the raw amino-acid sequence, 461 residues long: Protein IQ-DOMAIN 2 (461 aa).

Residues 1-55 (MGKKAKWFSSVKKAFSPDSKKSKQKLAEGQNGVISNPPVVDNVRQSSSSPPPALA) form a disordered region. The IQ domain maps to 114–142 (EEAAAILIQTIFRGYLARRALRAMRGLVR). A calmodulin-binding region spans residues 141–158 (VRLKLLMEGSVVKRQAAN). The interval 278–461 (PLESSEKEQS…GVTVTNGAGS (184 aa)) is disordered. A compositionally biased stretch (polar residues) spans 310-345 (LTRNGSTQPNTPSSARGTPRNKNSFFSPPTPSRLNQ). Positions 425–432 (KKRLSYPT) match the Nuclear localization signal motif.

This sequence belongs to the IQD family. Binds to multiple calmodulin (CaM) in the presence of Ca(2+) and CaM-like proteins.

The protein resides in the nucleus. The protein localises to the cytoplasm. It localises to the cytoskeleton. Functionally, may be involved in cooperative interactions with calmodulins or calmodulin-like proteins. Recruits calmodulin proteins to microtubules, thus being a potential scaffold in cellular signaling and trafficking. May associate with nucleic acids and regulate gene expression at the transcriptional or post-transcriptional level. The polypeptide is Protein IQ-DOMAIN 2 (Arabidopsis thaliana (Mouse-ear cress)).